Here is a 559-residue protein sequence, read N- to C-terminus: Phenylalanine--tRNA ligase beta subunit (559 aa).

The region spanning 274 to 350 (FEPKIIDVHT…LGYGFNELPA (77 aa)) is the B5 domain. The Mg(2+) site is built by Asp-328, Asp-334, Glu-337, and Asn-338.

This sequence belongs to the phenylalanyl-tRNA synthetase beta subunit family. Type 2 subfamily. Tetramer of two alpha and two beta subunits. Requires Mg(2+) as cofactor.

Its subcellular location is the cytoplasm. It catalyses the reaction tRNA(Phe) + L-phenylalanine + ATP = L-phenylalanyl-tRNA(Phe) + AMP + diphosphate + H(+). This Methanosphaera stadtmanae (strain ATCC 43021 / DSM 3091 / JCM 11832 / MCB-3) protein is Phenylalanine--tRNA ligase beta subunit.